Reading from the N-terminus, the 846-residue chain is Disks large-associated protein 5 (846 aa).

Serine 67 carries the post-translational modification Phosphoserine; by CDK1. A coiled-coil region spans residues 90–120 (RKQMLQKYKEEKQLQKLKEQREKAKRGIFKV). The tract at residues 153 to 284 (TRSKAKDQME…TNATSGMNPD (132 aa)) is disordered. Composition is skewed to basic and acidic residues over residues 156–174 (KAKD…DVRA) and 182–194 (TSEK…EKKV). A Phosphoserine modification is found at serine 202. Polar residues predominate over residues 203 to 225 (LRMTRSATQAAKQVPRTVSSTTA). The span at 250 to 266 (KNVETKPDKGISCKVDS) shows a compositional bias: basic and acidic residues. Residues 269–281 (NTLNSQTNATSGM) are compositionally biased toward polar residues. Phosphothreonine is present on threonine 326. Threonine 329 is modified (phosphothreonine; by CDK1). Phosphothreonine is present on threonine 338. Lysine 347 is covalently cross-linked (Glycyl lysine isopeptide (Lys-Gly) (interchain with G-Cter in SUMO2)). Threonine 401 and threonine 402 each carry phosphothreonine; by CDK1. Serine 618 carries the phosphoserine; by CDK1 modification. Phosphoserine; by AURKA is present on serine 627. A compositionally biased stretch (polar residues) spans 628–671 (VSSEGPSQRLGTPKSVNKAVSQSRNEMGIPQQTTSPENAGPQNT). The interval 628–674 (VSSEGPSQRLGTPKSVNKAVSQSRNEMGIPQQTTSPENAGPQNTKSE) is disordered. 2 positions are modified to phosphoserine: serine 629 and serine 634. Threonine 639 carries the phosphothreonine; by CDK1 modification. Serine 642 is subject to Phosphoserine; by CDK1. A Phosphoserine modification is found at serine 662. 2 positions are modified to phosphoserine; by AURKA: serine 725 and serine 757. Position 759 is a phosphothreonine; by CDK1 (threonine 759). Serine 774 and serine 777 each carry phosphoserine. Threonine 784 bears the Phosphothreonine mark. A phosphoserine mark is found at serine 806 and serine 812. Phosphoserine; by AURKA is present on serine 830. Residue serine 839 is modified to Phosphoserine; by CDK1.

This sequence belongs to the SAPAP family. As to quaternary structure, interacts with CDK1. Interacts with the C-terminal proline-rich region of FBXO7. Recruited by FBXO7 to a SCF (SKP1-CUL1-F-box) protein complex in a CDK1/Cyclin B-phosphorylation dependent manner. Interacts with CDH1. Ubiquitinated, leading to its degradation. Post-translationally, decreased phosphorylation levels are associated with the differentiation of intestinal epithelial cells. In terms of tissue distribution, abundantly expressed in fetal liver. Expressed at lower levels in bone marrow, testis, colon, and placenta.

The protein localises to the nucleus. Its subcellular location is the cytoplasm. It is found in the cytoskeleton. The protein resides in the spindle. Its function is as follows. Potential cell cycle regulator that may play a role in carcinogenesis of cancer cells. Mitotic phosphoprotein regulated by the ubiquitin-proteasome pathway. Key regulator of adherens junction integrity and differentiation that may be involved in CDH1-mediated adhesion and signaling in epithelial cells. The polypeptide is Disks large-associated protein 5 (DLGAP5) (Homo sapiens (Human)).